We begin with the raw amino-acid sequence, 265 residues long: H-2 class II histocompatibility antigen, A-D beta chain (265 aa).

Residues Met1 to Gly27 form the signal peptide. Residues Gly28–Leu122 form a beta-1 region. The Extracellular segment spans residues Gly28 to Lys226. 2 cysteine pairs are disulfide-bonded: Cys42–Cys106 and Cys145–Cys201. N-linked (GlcNAc...) asparagine glycosylation occurs at Asn46. The tract at residues Glu123 to Trp216 is beta-2. The region spanning Pro125–Thr213 is the Ig-like C1-type domain. A connecting peptide region spans residues Arg217–Lys226. A helical transmembrane segment spans residues Met227–Ile247. Residues Arg248–Gln265 lie on the Cytoplasmic side of the membrane.

The protein belongs to the MHC class II family. In terms of processing, ubiquitinated in immature dendritic cells leading to down-regulation of MHC class II.

The protein resides in the membrane. This is H-2 class II histocompatibility antigen, A-D beta chain (H2-Ab1) from Mus musculus (Mouse).